Here is a 147-residue protein sequence, read N- to C-terminus: Sec-independent protein translocase protein TatB (147 aa).

Residues 1–21 (MFDFGFSELIVIAVVTLIVVG) form a helical membrane-spanning segment. Residues 117-147 (APAPMSLAPHGDAASAGREPAAVPGSGPEKA) are disordered.

Belongs to the TatB family. The Tat system comprises two distinct complexes: a TatABC complex, containing multiple copies of TatA, TatB and TatC subunits, and a separate TatA complex, containing only TatA subunits. Substrates initially bind to the TatABC complex, which probably triggers association of the separate TatA complex to form the active translocon.

Its subcellular location is the cell inner membrane. In terms of biological role, part of the twin-arginine translocation (Tat) system that transports large folded proteins containing a characteristic twin-arginine motif in their signal peptide across membranes. Together with TatC, TatB is part of a receptor directly interacting with Tat signal peptides. TatB may form an oligomeric binding site that transiently accommodates folded Tat precursor proteins before their translocation. The protein is Sec-independent protein translocase protein TatB of Aromatoleum aromaticum (strain DSM 19018 / LMG 30748 / EbN1) (Azoarcus sp. (strain EbN1)).